The sequence spans 119 residues: Hydrogenase maturation factor HypA (119 aa).

Residue H2 participates in Ni(2+) binding. C73, C76, C89, and C92 together coordinate Zn(2+).

The protein belongs to the HypA/HybF family.

Functionally, involved in the maturation of [NiFe] hydrogenases. Required for nickel insertion into the metal center of the hydrogenase. The sequence is that of Hydrogenase maturation factor HypA from Dehalococcoides mccartyi (strain CBDB1).